The primary structure comprises 214 residues: Dephospho-CoA kinase (214 aa).

A DPCK domain is found at 20-214; it reads RIGITGGIAS…KLQLKKLYKF (195 aa). An ATP-binding site is contributed by 28–33; the sequence is ASGKTI.

It belongs to the CoaE family.

It localises to the cytoplasm. The enzyme catalyses 3'-dephospho-CoA + ATP = ADP + CoA + H(+). Its pathway is cofactor biosynthesis; coenzyme A biosynthesis; CoA from (R)-pantothenate: step 5/5. Functionally, catalyzes the phosphorylation of the 3'-hydroxyl group of dephosphocoenzyme A to form coenzyme A. The sequence is that of Dephospho-CoA kinase from Prochlorococcus marinus (strain NATL2A).